Reading from the N-terminus, the 203-residue chain is Ribosomal RNA large subunit methyltransferase E (203 aa).

Residues glycine 60, tryptophan 62, aspartate 79, aspartate 95, and aspartate 119 each contribute to the S-adenosyl-L-methionine site. Lysine 159 serves as the catalytic Proton acceptor.

The protein belongs to the class I-like SAM-binding methyltransferase superfamily. RNA methyltransferase RlmE family.

The protein resides in the cytoplasm. The catalysed reaction is uridine(2552) in 23S rRNA + S-adenosyl-L-methionine = 2'-O-methyluridine(2552) in 23S rRNA + S-adenosyl-L-homocysteine + H(+). Functionally, specifically methylates the uridine in position 2552 of 23S rRNA at the 2'-O position of the ribose in the fully assembled 50S ribosomal subunit. The polypeptide is Ribosomal RNA large subunit methyltransferase E (Pelagibacter ubique (strain HTCC1062)).